The primary structure comprises 497 residues: Catalase-2 (497 aa).

Residues histidine 71 and asparagine 144 contribute to the active site. Tyrosine 354 is a binding site for heme.

The protein belongs to the catalase family. It depends on heme as a cofactor.

It carries out the reaction 2 H2O2 = O2 + 2 H2O. Functionally, catalase involved in the oxidative stress response serving to protect cells from toxicity. For instance plays a role in defending against oxidative damage induced by excessive copper stress. Not required for maintaining normal lifespan. The polypeptide is Catalase-2 (Caenorhabditis elegans).